The primary structure comprises 810 residues: Lon protease (810 aa).

The Lon N-terminal domain occupies 32–226 (LPAIAMRSNM…RILDILARET (195 aa)). 376–383 (GPPGVGKT) contributes to the ATP binding site. Residues 612 to 791 (KPMIGVTTGL…EEVLEVALNE (180 aa)) form the Lon proteolytic domain. Active-site residues include S697 and K740.

Belongs to the peptidase S16 family. In terms of assembly, homohexamer. Organized in a ring with a central cavity.

It is found in the cytoplasm. The enzyme catalyses Hydrolysis of proteins in presence of ATP.. In terms of biological role, ATP-dependent serine protease that mediates the selective degradation of mutant and abnormal proteins as well as certain short-lived regulatory proteins. Required for cellular homeostasis and for survival from DNA damage and developmental changes induced by stress. Degrades polypeptides processively to yield small peptide fragments that are 5 to 10 amino acids long. Binds to DNA in a double-stranded, site-specific manner. The protein is Lon protease of Fervidobacterium nodosum (strain ATCC 35602 / DSM 5306 / Rt17-B1).